We begin with the raw amino-acid sequence, 115 residues long: Secreted RxLR effector protein 2 (115 aa).

The N-terminal stretch at 1–22 (MICRSPLIVVMLFVIAAHTVLA) is a signal peptide. The RxLR-dEER motif lies at 57–82 (RFLRQETTFEKKLGVNDVHAVHAEER).

Belongs to the RxLR effector family.

It is found in the secreted. It localises to the host cytoplasm. Its subcellular location is the host nucleus. Its function is as follows. Effector that acts as a broad suppressor of cell death to interrupt plant immunity. Inhibits cell death induced by cell death-inducing proteins, including the PAMP elicitor INF1 from P.infestans. In Plasmopara viticola (Downy mildew of grapevine), this protein is Secreted RxLR effector protein 2.